The chain runs to 113 residues: Putative pterin-4-alpha-carbinolamine dehydratase (113 aa).

Belongs to the pterin-4-alpha-carbinolamine dehydratase family.

It carries out the reaction (4aS,6R)-4a-hydroxy-L-erythro-5,6,7,8-tetrahydrobiopterin = (6R)-L-erythro-6,7-dihydrobiopterin + H2O. The sequence is that of Putative pterin-4-alpha-carbinolamine dehydratase from Hydrogenovibrio crunogenus (strain DSM 25203 / XCL-2) (Thiomicrospira crunogena).